A 414-amino-acid polypeptide reads, in one-letter code: Serine hydroxymethyltransferase (414 aa).

(6S)-5,6,7,8-tetrahydrofolate is bound by residues Leu121 and 125–127; that span reads GHL. At Lys229 the chain carries N6-(pyridoxal phosphate)lysine.

Belongs to the SHMT family. As to quaternary structure, homodimer. Pyridoxal 5'-phosphate serves as cofactor.

Its subcellular location is the cytoplasm. The catalysed reaction is (6R)-5,10-methylene-5,6,7,8-tetrahydrofolate + glycine + H2O = (6S)-5,6,7,8-tetrahydrofolate + L-serine. It functions in the pathway one-carbon metabolism; tetrahydrofolate interconversion. It participates in amino-acid biosynthesis; glycine biosynthesis; glycine from L-serine: step 1/1. Its function is as follows. Catalyzes the reversible interconversion of serine and glycine with tetrahydrofolate (THF) serving as the one-carbon carrier. This reaction serves as the major source of one-carbon groups required for the biosynthesis of purines, thymidylate, methionine, and other important biomolecules. Also exhibits THF-independent aldolase activity toward beta-hydroxyamino acids, producing glycine and aldehydes, via a retro-aldol mechanism. The sequence is that of Serine hydroxymethyltransferase from Paracidovorax citrulli (strain AAC00-1) (Acidovorax citrulli).